The chain runs to 278 residues: MANYTAADVKKLRELTGAGMMDCKKALDEAEGNVEKAVEALRIKGQKGVAKREGRSAENGAVVSIIADDNTSGVLVELKCETDFVAKGEKFQNVATAIAEHVAKAAPADLEALLASEIEPGKTVQAYVDEANANLGEKIVLDRFAQFSGGFVTAYMHRTMPDLPPQIGVLVELDKPNAEIAKGVAQHIAAFAPKYLSKEDVPAEVVESERRVAEETTRAEGKPEAALPKIVEGRLNGFFKDATLLGQPYALDNKKSVQKVLEEAGVSLKRFSRIKVGI.

The tract at residues 82 to 85 (TDFV) is involved in Mg(2+) ion dislocation from EF-Tu.

The protein belongs to the EF-Ts family.

It localises to the cytoplasm. Associates with the EF-Tu.GDP complex and induces the exchange of GDP to GTP. It remains bound to the aminoacyl-tRNA.EF-Tu.GTP complex up to the GTP hydrolysis stage on the ribosome. The polypeptide is Elongation factor Ts (tsf) (Streptomyces coelicolor (strain ATCC BAA-471 / A3(2) / M145)).